The primary structure comprises 366 residues: tRNA/tmRNA (uracil-C(5))-methyltransferase (366 aa).

Residues Gln-189, Tyr-217, Asn-222, Glu-238, and Asp-298 each contribute to the S-adenosyl-L-methionine site. Residue Cys-323 is the Nucleophile of the active site. Glu-357 functions as the Proton acceptor in the catalytic mechanism.

Belongs to the class I-like SAM-binding methyltransferase superfamily. RNA M5U methyltransferase family. TrmA subfamily.

The catalysed reaction is uridine(54) in tRNA + S-adenosyl-L-methionine = 5-methyluridine(54) in tRNA + S-adenosyl-L-homocysteine + H(+). It catalyses the reaction uridine(341) in tmRNA + S-adenosyl-L-methionine = 5-methyluridine(341) in tmRNA + S-adenosyl-L-homocysteine + H(+). Dual-specificity methyltransferase that catalyzes the formation of 5-methyluridine at position 54 (m5U54) in all tRNAs, and that of position 341 (m5U341) in tmRNA (transfer-mRNA). The polypeptide is tRNA/tmRNA (uracil-C(5))-methyltransferase (Shewanella oneidensis (strain ATCC 700550 / JCM 31522 / CIP 106686 / LMG 19005 / NCIMB 14063 / MR-1)).